The primary structure comprises 119 residues: Immunoglobulin heavy variable 3-49 (119 aa).

Positions 1 to 19 (MEFGLSWVFLVAILKGVQC) are cleaved as a signal peptide. Positions 20–44 (EVQLVESGGGLVQPGRSLRLSCTAS) are framework-1. The region spanning 20–119 (EVQLVESGGG…EDTAVYYCTR (100 aa)) is the Ig-like domain. Cys-41 and Cys-117 are oxidised to a cystine. The interval 45–52 (GFTFGDYA) is complementarity-determining-1. Positions 53-69 (MSWVRQAPGKGLEWVGF) are framework-2. Positions 70-79 (IRSKAYGGTT) are complementarity-determining-2. The tract at residues 80 to 117 (EYAASVKGRFTISRDDSKSIAYLQMNSLKTEDTAVYYC) is framework-3. Residues 118 to 119 (TR) form a complementarity-determining-3 region.

In terms of assembly, immunoglobulins are composed of two identical heavy chains and two identical light chains; disulfide-linked.

The protein localises to the secreted. The protein resides in the cell membrane. In terms of biological role, v region of the variable domain of immunoglobulin heavy chains that participates in the antigen recognition. Immunoglobulins, also known as antibodies, are membrane-bound or secreted glycoproteins produced by B lymphocytes. In the recognition phase of humoral immunity, the membrane-bound immunoglobulins serve as receptors which, upon binding of a specific antigen, trigger the clonal expansion and differentiation of B lymphocytes into immunoglobulins-secreting plasma cells. Secreted immunoglobulins mediate the effector phase of humoral immunity, which results in the elimination of bound antigens. The antigen binding site is formed by the variable domain of one heavy chain, together with that of its associated light chain. Thus, each immunoglobulin has two antigen binding sites with remarkable affinity for a particular antigen. The variable domains are assembled by a process called V-(D)-J rearrangement and can then be subjected to somatic hypermutations which, after exposure to antigen and selection, allow affinity maturation for a particular antigen. The sequence is that of Immunoglobulin heavy variable 3-49 from Homo sapiens (Human).